The sequence spans 353 residues: O-antigen chain mannosyltransferase RfbU (353 aa).

The protein belongs to the glycosyltransferase group 1 family. Glycosyltransferase 4 subfamily.

The catalysed reaction is alpha-L-rhamnosyl-(1-&gt;3)-alpha-D-galactosyl-1-diphospho-di-trans,octa-cis-undecaprenol + GDP-alpha-D-mannose = alpha-D-Man-(1-&gt;4)-alpha-L-Rha-(1-&gt;3)-alpha-D-Gal-di-trans,octa-cis-undecaprenyl diphosphate + GDP + H(+). The protein operates within bacterial outer membrane biogenesis; LPS O-antigen biosynthesis. In terms of biological role, mannosyltransferase involved in the biosynthesis of the repeat unit of the lipopolysaccharide (LPS) O-antigen region. Catalyzes the addition of a mannose to the rhamnosyl-galactosyl-undecaprenyl diphosphate intermediate. In Salmonella typhimurium (strain LT2 / SGSC1412 / ATCC 700720), this protein is O-antigen chain mannosyltransferase RfbU.